A 349-amino-acid polypeptide reads, in one-letter code: Protein-glutamate methylesterase/protein-glutamine glutaminase (349 aa).

The Response regulatory domain occupies 5 to 122 (RVLSVDDSAL…REGMLAYSEM (118 aa)). Asp56 bears the 4-aspartylphosphate mark. A CheB-type methylesterase domain is found at 152–344 (LLSSEKLIAI…QQMLAKISAG (193 aa)). Catalysis depends on residues Ser164, His190, and Asp286.

It belongs to the CheB family. Post-translationally, phosphorylated by CheA. Phosphorylation of the N-terminal regulatory domain activates the methylesterase activity.

It localises to the cytoplasm. It carries out the reaction [protein]-L-glutamate 5-O-methyl ester + H2O = L-glutamyl-[protein] + methanol + H(+). The enzyme catalyses L-glutaminyl-[protein] + H2O = L-glutamyl-[protein] + NH4(+). Its function is as follows. Involved in chemotaxis. Part of a chemotaxis signal transduction system that modulates chemotaxis in response to various stimuli. Catalyzes the demethylation of specific methylglutamate residues introduced into the chemoreceptors (methyl-accepting chemotaxis proteins or MCP) by CheR. Also mediates the irreversible deamidation of specific glutamine residues to glutamic acid. The sequence is that of Protein-glutamate methylesterase/protein-glutamine glutaminase from Salmonella typhi.